The primary structure comprises 243 residues: Uridylate kinase (243 aa).

Position 15-18 (Lys15–Gly18) interacts with ATP. The involved in allosteric activation by GTP stretch occupies residues Gly23–Gly28. Gly57 is a binding site for UMP. 2 residues coordinate ATP: Gly58 and Arg62. UMP is bound by residues Asp77 and Thr138 to Thr145. ATP contacts are provided by Thr165, Tyr171, and Asp174.

This sequence belongs to the UMP kinase family. As to quaternary structure, homohexamer.

It is found in the cytoplasm. It catalyses the reaction UMP + ATP = UDP + ADP. It participates in pyrimidine metabolism; CTP biosynthesis via de novo pathway; UDP from UMP (UMPK route): step 1/1. With respect to regulation, allosterically activated by GTP. Inhibited by UTP. Catalyzes the reversible phosphorylation of UMP to UDP. This is Uridylate kinase from Vibrio cholerae serotype O1 (strain ATCC 39541 / Classical Ogawa 395 / O395).